The chain runs to 514 residues: GTPase Obg (514 aa).

In terms of domain architecture, Obg spans 2–159 (ATFVDRVTVH…GDILLELKTV (158 aa)). A disordered region spans residues 62-88 (RRPHRSSGNGGFGMGDHRSGHTGEDLE). The segment covering 76–85 (GDHRSGHTGE) has biased composition (basic and acidic residues). The 177-residue stretch at 160 to 336 (ADIALVGYPS…LSFALAELVE (177 aa)) folds into the OBG-type G domain. Residues 166-173 (GYPSAGKS), 191-195 (FTTLH), 212-215 (DVPG), 288-291 (NKID), and 317-319 (STV) contribute to the GTP site. Residues serine 173 and threonine 193 each coordinate Mg(2+). An OCT domain is found at 356–440 (PKTVDDSGFV…ENGVVFDWEP (85 aa)).

Belongs to the TRAFAC class OBG-HflX-like GTPase superfamily. OBG GTPase family. As to quaternary structure, monomer. It depends on Mg(2+) as a cofactor.

The protein resides in the cytoplasm. An essential GTPase which binds GTP, GDP and possibly (p)ppGpp with moderate affinity, with high nucleotide exchange rates and a fairly low GTP hydrolysis rate. Plays a role in control of the cell cycle, stress response, ribosome biogenesis and in those bacteria that undergo differentiation, in morphogenesis control. This is GTPase Obg from Leifsonia xyli subsp. xyli (strain CTCB07).